The primary structure comprises 426 residues: Glutamate-1-semialdehyde 2,1-aminomutase (426 aa).

Lys-265 carries the post-translational modification N6-(pyridoxal phosphate)lysine.

The protein belongs to the class-III pyridoxal-phosphate-dependent aminotransferase family. HemL subfamily. In terms of assembly, homodimer. The cofactor is pyridoxal 5'-phosphate.

It is found in the cytoplasm. The catalysed reaction is (S)-4-amino-5-oxopentanoate = 5-aminolevulinate. It functions in the pathway porphyrin-containing compound metabolism; protoporphyrin-IX biosynthesis; 5-aminolevulinate from L-glutamyl-tRNA(Glu): step 2/2. The polypeptide is Glutamate-1-semialdehyde 2,1-aminomutase (Alteromonas mediterranea (strain DSM 17117 / CIP 110805 / LMG 28347 / Deep ecotype)).